The primary structure comprises 1733 residues: Probable nuclear antigen (1733 aa).

Disordered regions lie at residues 1-41, 71-394, 437-506, 520-548, 882-907, 993-1141, 1223-1242, 1348-1475, 1585-1608, and 1630-1665; these read MNLF…THFT, PHPP…EQQV, AGAG…EGAQ, APAAAGDEDGPQRGAEPPAVGRAVPEGGA, LGGGGGGGQQRGSGVRSGPESEGAAL, AGGP…EDAA, PERVLGGHGVPDVRQRRGHA, GAGP…GRAG, SGGGGAAAAGRRDRPGGGGGWGSG, and PRRRPGLTDRVPPRGGPSPRGCRGAGRAGGGGRGGC. Residues 21–31 show a composition bias toward basic residues; sequence DHHHQQHHHHP. The segment covering 77–97 has biased composition (basic and acidic residues); it reads PQDHHRPTPARDHRDPRDHLP. Positions 113–131 are enriched in low complexity; it reads TTTTTIKDPQHPQDPLLLP. Basic and acidic residues predominate over residues 135–147; the sequence is LQEEDPHLLRPTR. The span at 179–189 shows a compositional bias: pro residues; the sequence is GGGPPSPPPRP. Low complexity predominate over residues 190 to 201; that stretch reads STSSSSSHQGPP. Residues 202-220 show a composition bias toward pro residues; it reads STRPPPPQRPPPRWPPPSP. The span at 227 to 240 shows a compositional bias: polar residues; it reads RAGSENTAQTLFSH. The segment covering 272-299 has biased composition (pro residues); it reads PPPSPPPRPPPPLPPPPPPPPPPQPPPA. Over residues 316–326 the composition is skewed to basic residues; it reads GGRRRGGKRRR. Residues 336-354 show a composition bias toward acidic residues; the sequence is DAEEEEDGDGDEDEDEDRA. A compositionally biased stretch (basic and acidic residues) spans 355 to 364; the sequence is EGEGREDGGE. Composition is skewed to gly residues over residues 365–374, 454–466, and 479–494; these read GPRGAGGGAG, GAPGGGADAGLEG, and GGDGARGQHQRGGLGV. The span at 495-506 shows a compositional bias: low complexity; that stretch reads GLQQRRGAEGAQ. Residues 882-892 show a composition bias toward gly residues; the sequence is LGGGGGGGQQR. A compositionally biased stretch (low complexity) spans 893 to 907; that stretch reads GSGVRSGPESEGAAL. Composition is skewed to gly residues over residues 993 to 1004 and 1027 to 1043; these read AGGPGAGEAGGG and AGRGLRGPGPRGGLGEP. Basic and acidic residues-rich tracts occupy residues 1078–1087 and 1100–1112; these read GAGDEGDRVR and RVAEREQRGRHLL. Residues 1116-1127 show a composition bias toward gly residues; that stretch reads GPEGGRGAGGRG. The span at 1385–1407 shows a compositional bias: gly residues; it reads GPGGLRGRGRGGRGGGGGGGGRG. 2 stretches are compositionally biased toward basic residues: residues 1408–1420 and 1444–1453; these read PRGRGGRRRRRWR and RGGRGGRGGR. The segment covering 1454–1474 has biased composition (gly residues); that stretch reads GRGGGRAPRGGGGGPGGGGRA. Residues 1652-1665 are compositionally biased toward gly residues; it reads RGAGRAGGGGRGGC.

This is Probable nuclear antigen from Sus scrofa (Pig).